Consider the following 283-residue polypeptide: Elongation factor Ts (283 aa).

The involved in Mg(2+) ion dislocation from EF-Tu stretch occupies residues 79-82 (TDFV).

The protein belongs to the EF-Ts family.

It is found in the cytoplasm. In terms of biological role, associates with the EF-Tu.GDP complex and induces the exchange of GDP to GTP. It remains bound to the aminoacyl-tRNA.EF-Tu.GTP complex up to the GTP hydrolysis stage on the ribosome. The chain is Elongation factor Ts from Shewanella oneidensis (strain ATCC 700550 / JCM 31522 / CIP 106686 / LMG 19005 / NCIMB 14063 / MR-1).